The sequence spans 423 residues: Glutamate-1-semialdehyde 2,1-aminomutase (423 aa).

Lys-262 carries the N6-(pyridoxal phosphate)lysine modification.

Belongs to the class-III pyridoxal-phosphate-dependent aminotransferase family. HemL subfamily. Homodimer. Requires pyridoxal 5'-phosphate as cofactor.

The protein localises to the cytoplasm. It carries out the reaction (S)-4-amino-5-oxopentanoate = 5-aminolevulinate. It functions in the pathway porphyrin-containing compound metabolism; protoporphyrin-IX biosynthesis; 5-aminolevulinate from L-glutamyl-tRNA(Glu): step 2/2. The sequence is that of Glutamate-1-semialdehyde 2,1-aminomutase from Campylobacter fetus subsp. fetus (strain 82-40).